The chain runs to 632 residues: Probable potassium transport system protein Kup 1 (632 aa).

A run of 12 helical transmembrane segments spans residues 17–37, 60–80, 106–126, 144–164, 175–195, 210–230, 254–274, 292–312, 344–364, 370–390, 401–421, and 426–446; these read LFYL…TSPL, LISL…VLFL, TALL…DAMI, PSLA…LFVV, FFGP…ISHI, AVSF…AVFL, WFLL…ALVL, ALLP…QAVI, IFLP…VLSF, LATA…IMAF, LPVA…FLGA, and IHDG…VMWT.

It belongs to the HAK/KUP transporter (TC 2.A.72) family.

It localises to the cell inner membrane. The enzyme catalyses K(+)(in) + H(+)(in) = K(+)(out) + H(+)(out). Functionally, transport of potassium into the cell. Likely operates as a K(+):H(+) symporter. In Rhizobium etli (strain ATCC 51251 / DSM 11541 / JCM 21823 / NBRC 15573 / CFN 42), this protein is Probable potassium transport system protein Kup 1.